Consider the following 172-residue polypeptide: Keratin-associated protein 13-1 (172 aa).

Repeat copies occupy residues 46 to 55 (CQLGSSLYRG), 56 to 65 (CQQTCWEPTS), 66 to 75 (CQTSYVESSP), 76 to 85 (CQTSCYRPRT), and 92 to 101 (CQTTYSGSLG). Residues 46 to 101 (CQLGSSLYRGCQQTCWEPTSCQTSYVESSPCQTSCYRPRTSLLCSPCQTTYSGSLG) form a 5 X 10 AA approximate repeats region.

The protein belongs to the PMG family. Interacts with hair keratins. Weak expression seen in the late matrix and entire cortex area of the hair follicle.

Functionally, in the hair cortex, hair keratin intermediate filaments are embedded in an interfilamentous matrix, consisting of hair keratin-associated proteins (KRTAP), which are essential for the formation of a rigid and resistant hair shaft through their extensive disulfide bond cross-linking with abundant cysteine residues of hair keratins. The matrix proteins include the high-sulfur and high-glycine-tyrosine keratins. This chain is Keratin-associated protein 13-1 (KRTAP13-1), found in Homo sapiens (Human).